Here is a 436-residue protein sequence, read N- to C-terminus: Serine--tRNA ligase (436 aa).

The segment covering 43 to 55 (TKSEQLKQKRNEV) has biased composition (basic and acidic residues). The interval 43 to 69 (TKSEQLKQKRNEVSDQIAQAKRNKEDA) is disordered. 237-239 (TAE) is an L-serine binding site. An ATP-binding site is contributed by 268–270 (RSE). Glu291 contacts L-serine. Position 355 to 358 (355 to 358 (EISS)) interacts with ATP. L-serine is bound at residue Ser390.

Belongs to the class-II aminoacyl-tRNA synthetase family. Type-1 seryl-tRNA synthetase subfamily. In terms of assembly, homodimer. The tRNA molecule binds across the dimer.

The protein localises to the cytoplasm. It catalyses the reaction tRNA(Ser) + L-serine + ATP = L-seryl-tRNA(Ser) + AMP + diphosphate + H(+). The enzyme catalyses tRNA(Sec) + L-serine + ATP = L-seryl-tRNA(Sec) + AMP + diphosphate + H(+). The protein operates within aminoacyl-tRNA biosynthesis; selenocysteinyl-tRNA(Sec) biosynthesis; L-seryl-tRNA(Sec) from L-serine and tRNA(Sec): step 1/1. In terms of biological role, catalyzes the attachment of serine to tRNA(Ser). Is also able to aminoacylate tRNA(Sec) with serine, to form the misacylated tRNA L-seryl-tRNA(Sec), which will be further converted into selenocysteinyl-tRNA(Sec). This is Serine--tRNA ligase from Lactobacillus gasseri (strain ATCC 33323 / DSM 20243 / BCRC 14619 / CIP 102991 / JCM 1131 / KCTC 3163 / NCIMB 11718 / NCTC 13722 / AM63).